Reading from the N-terminus, the 549-residue chain is Probable amidase (549 aa).

Catalysis depends on charge relay system residues K132 and S209. S233 acts as the Acyl-ester intermediate in catalysis.

Belongs to the amidase family.

It carries out the reaction a monocarboxylic acid amide + H2O = a monocarboxylate + NH4(+). The chain is Probable amidase (AMD2) from Saccharomyces cerevisiae (strain ATCC 204508 / S288c) (Baker's yeast).